Consider the following 1465-residue polypeptide: Vacuolar heme ABC transmembrane exporter abc3 (1465 aa).

Over 1-8 (MITANKGL) the chain is Extracellular. A helical membrane pass occupies residues 9–29 (SLVLLIPNLFALVSGGLQYVF). The Cytoplasmic segment spans residues 30–42 (DVRRRIFRPHFSQ). A helical transmembrane segment spans residues 43–63 (FWTIWMKFFSIALVIITQIYV). At 64–69 (GYKTKN) the chain is on the extracellular side. The chain crosses the membrane as a helical span at residues 70 to 90 (IGWNFFSVVTYCFVLFLQFAE). The Cytoplasmic segment spans residues 91–97 (QSTLRVP). A helical transmembrane segment spans residues 98–118 (MASLLIFWLLKVVTSLLILLF). Residues 119–129 (SPYIAITSMAR) are Extracellular-facing. Residues 130 to 150 (LLTLITLFCSLVCFISEVYVP) traverse the membrane as a helical segment. 151-152 (PC) contributes to the heme binding site. At 151 to 235 (PCNRVWYSDD…IYHSKNKRRS (85 aa)) the chain is on the cytoplasmic side. The helical transmembrane segment at 236–256 (LFLWKLLFFNHWKLVALITIT) threads the bilayer. An ABC transmembrane type-1 1 domain is found at 250–539 (VALITITKLI…LPTVISSLLE (290 aa)). Topologically, residues 257 to 291 (KLIQDVLAFVQPTLIQKTILFISSYTSPNPESPSR) are extracellular. Residues 292–312 (GFIIAILVLVANFLQTLLLQQ) form a helical membrane-spanning segment. The Cytoplasmic segment spans residues 313 to 362 (YNQLIMLLGMRWKTELLASIYRKSLLLSSSARQNRSIGDIINYMAVDTQK). Residues 363 to 383 (ISDLPIYLFIIVSGPFQIALA) traverse the membrane as a helical segment. Residues 384–394 (LSNLYHLMGYS) lie on the Extracellular side of the membrane. A helical transmembrane segment spans residues 395–415 (AFTGVAASVILFPCNIIVANV). The Cytoplasmic segment spans residues 416–480 (YKKFQSILMK…KIGFITAIGD (65 aa)). Residues 481-501 (FAWIFTTIIVTTVAFGAFIIF) traverse the membrane as a helical segment. Topologically, residues 502-511 (HGKTQALTAD) are extracellular. The helical transmembrane segment at 512–532 (IVFPAVSLFNLLQFPLAMLPT) threads the bilayer. The Cytoplasmic portion of the chain corresponds to 533 to 899 (VISSLLEASV…VYWMYFKSCS (367 aa)). Residues 575 to 804 (LEIKSGTFSW…TNSELKQQLS (230 aa)) form the ABC transporter 1 domain. ATP is bound at residue 614–621 (GKVGAGKS). Disordered regions lie at residues 805–824 (EFNDEKDTQPLPEHTTSYPS) and 840–869 (TYSSSERKDSSNKYKSRKRNPIRQKVTEDD). A helical membrane pass occupies residues 900-920 (IGLILLYFFFIISGIMMNVAT). The ABC transmembrane type-1 2 domain occupies 903–1189 (ILLYFFFIIS…IVQQSVDAEN (287 aa)). The Extracellular portion of the chain corresponds to 921–939 (NVWLKHWSEENGKSSSELN). A helical membrane pass occupies residues 940–960 (PSPYFYLGIYLFFGFLSCAFI). Over 961–1033 (SSSSLTMTVL…FFFRNSIQVL (73 aa)) the chain is Cytoplasmic. The chain crosses the membrane as a helical span at residues 1034 to 1054 (FILGVICYSAPLSLLLIVPLF). Residues 1055 to 1465 (FLYLYNRAYY…YSLAKESGLI (411 aa)) lie on the Extracellular side of the membrane. The region spanning 1226–1460 (VSFNHYSAKY…KDSMFYSLAK (235 aa)) is the ABC transporter 2 domain. 1260-1267 (GRTGAGKS) provides a ligand contact to ATP.

It belongs to the ABC transporter superfamily.

The protein localises to the vacuole membrane. Iron-regulated vacuolar transporter that mobilizes stored heme from the vacuole to the cytosol in response to iron deficiency. The protein is Vacuolar heme ABC transmembrane exporter abc3 of Schizosaccharomyces pombe (strain 972 / ATCC 24843) (Fission yeast).